Consider the following 293-residue polypeptide: Phosphate-binding protein PstS 2 (293 aa).

The first 23 residues, 1–23, serve as a signal peptide directing secretion; that stretch reads MKKHKMLSLLAVSGLMGIGILAG. Residue Cys-24 is the site of N-palmitoyl cysteine attachment. Cys-24 carries the S-diacylglycerol cysteine lipid modification.

The protein belongs to the PstS family. The complex is composed of two ATP-binding proteins (PstB), two transmembrane proteins (PstC and PstA) and a solute-binding protein (PstS).

The protein localises to the cell membrane. Its function is as follows. Part of the ABC transporter complex PstSACB involved in phosphate import. The chain is Phosphate-binding protein PstS 2 (pstS2) from Streptococcus agalactiae serotype III (strain NEM316).